The following is a 94-amino-acid chain: Small polypeptide ROTUNDIFOLIA LIKE 1 (94 aa).

Residues 1–13 (MRQCASASSSTSR) are compositionally biased toward polar residues. Residues 1–26 (MRQCASASSSTSRPPEAAGEEGKRRR) form a disordered region. The required for DVL/RTFL small polypeptide activity stretch occupies residues 28 to 59 (RRGWLLQAAAREQRSRFYIFRRCVAMLLCWYK). Residues 63–82 (ITPYNVVPLGIYGLVWFATM) traverse the membrane as a helical segment.

Belongs to the DVL/RTFL small polypeptides family.

It localises to the cell membrane. Its function is as follows. Small polypeptide acting as a regulatory molecule which coordinates cellular responses required for differentiation, growth and development, probably by restricting polar cell proliferation in lateral organs. In Oryza sativa subsp. japonica (Rice), this protein is Small polypeptide ROTUNDIFOLIA LIKE 1.